The primary structure comprises 55 residues: Large ribosomal subunit protein bL33 (55 aa).

Belongs to the bacterial ribosomal protein bL33 family.

In Rhizorhabdus wittichii (strain DSM 6014 / CCUG 31198 / JCM 15750 / NBRC 105917 / EY 4224 / RW1) (Sphingomonas wittichii), this protein is Large ribosomal subunit protein bL33.